The chain runs to 110 residues: Flagellar hook-basal body complex protein FliE (110 aa).

The protein belongs to the FliE family.

The protein localises to the bacterial flagellum basal body. The chain is Flagellar hook-basal body complex protein FliE from Bordetella petrii (strain ATCC BAA-461 / DSM 12804 / CCUG 43448).